The primary structure comprises 2430 residues: Transcription factor HIVEP2 (2430 aa).

Positions 1–127 (MDTGDTALGQ…SLEGPPWLFP (127 aa)) are disordered. 2 stretches are compositionally biased toward polar residues: residues 11 to 22 (KATSRSGETDSV) and 96 to 110 (HSLS…QGMT). 2 consecutive C2H2-type zinc fingers follow at residues 189–211 (YICP…IRSH) and 217–239 (YPCI…RKSH). Disordered regions lie at residues 271–302 (IHSD…PPVP), 374–418 (SEKK…NTNA), and 744–995 (AHGH…SGKH). Positions 381–418 (SEPSLNLLSPHSKGSTDSGYFSRSESAEQQISPPNTNA) are enriched in polar residues. Basic and acidic residues-rich tracts occupy residues 744 to 753 (AHGHSDRLDP) and 775 to 784 (DPDKMTDLGK). The segment covering 792-804 (SVIQHTNSLSRPN) has biased composition (polar residues). A Phosphoserine modification is found at S811. A compositionally biased stretch (polar residues) spans 853–863 (SKPTPSQQVPQ). The segment covering 884–908 (RVTEEPDKPEKEKEAPTKEPEKPVE) has biased composition (basic and acidic residues). The short motif at 929–935 (PKKKRLR) is the Nuclear localization signal element. S942, S947, S1040, S1431, and S1435 each carry phosphoserine. Low complexity predominate over residues 944-974 (GESSFESTGTGLSRSPSQESNLSHSSSFSMS). Residues 1472 to 1584 (KKGLSRPQKP…GGQQEEEGKA (113 aa)) form a disordered region. 2 stretches are compositionally biased toward low complexity: residues 1499-1520 (SRSS…SASG) and 1560-1569 (SDMSMSPQSS). 2 C2H2-type zinc fingers span residues 1783–1805 (YICE…IRTH) and 1811–1835 (YVCK…SKAH). Disordered regions lie at residues 1848–1931 (SVDD…SSLP) and 1986–2117 (FQSK…SPRR). The span at 1850–1860 (DDTETEEAENM) shows a compositional bias: acidic residues. Residues 1861–1871 (EELHKTSEKHS) show a composition bias toward basic and acidic residues. The span at 1883 to 1909 (DAEESDGEDGDDNDDDDEDDDDFDDQG) shows a compositional bias: acidic residues. Residues 1991-2001 (TDSEPDKDRLD) are compositionally biased toward basic and acidic residues. The span at 2013 to 2037 (SSEPSSSPRDFSPSSYRSSPGYDSS) shows a compositional bias: low complexity. 10 repeat units span residues 2037-2040 (SPCR), 2043-2046 (SPKR), 2055-2058 (SPRR), 2067-2070 (SPMR), 2073-2076 (SPRK), 2090-2093 (SPRR), 2096-2099 (SPRR), 2102-2105 (SPGK), 2114-2117 (SPRR), and 2129-2132 (SPRR). The interval 2037-2132 (SPCRDNSPKR…TTIRAPSPRR (96 aa)) is 10 X 4 AA tandem repeats of S-P-[RGMKC]-[RK]. Over residues 2062-2085 (PRRDLSPMRHLSPRKEAALRREMS) the composition is skewed to basic and acidic residues. A Phosphoserine modification is found at S2102. Over residues 2107–2116 (ITARRDLSPR) the composition is skewed to basic and acidic residues. 3 disordered regions span residues 2226–2252 (PALS…GAPG), 2268–2309 (KQAP…QEEN), and 2352–2430 (SIRH…NQLH). A compositionally biased stretch (low complexity) spans 2271–2289 (PQVLQSSGLPSSPSSPRLL). 2 positions are modified to phosphoserine: S2281 and S2285. Polar residues predominate over residues 2291 to 2301 (KQSTSEDSLNS). Positions 2371 to 2380 (PDLHDGEKDT) are enriched in basic and acidic residues. Residues 2406 to 2417 (FQSSKELSLSTE) show a composition bias toward polar residues. S2413 and S2415 each carry phosphoserine.

As to quaternary structure, interacts with TCF4. As to expression, expressed in heart, lung, skeletal muscle and liver. In the brain expressed in cerebral cortex, hippocampus, corpora amygdala and cerebellar cortex.

The protein resides in the nucleus. In terms of biological role, specifically binds to the DNA sequence 5'-GGGACTTTCC-3' which is found in the enhancer elements of numerous viral promoters such as those of SV40, CMV, or HIV1. In addition, related sequences are found in the enhancer elements of a number of cellular promoters, including those of the class I MHC, interleukin-2 receptor, somatostatin receptor II, and interferon-beta genes. It may act in T-cell activation. This Mus musculus (Mouse) protein is Transcription factor HIVEP2 (Hivep2).